Reading from the N-terminus, the 64-residue chain is Large ribosomal subunit protein bL33m (64 aa).

This sequence belongs to the bacterial ribosomal protein bL33 family. In terms of assembly, component of the mitochondrial ribosome large subunit (39S) which comprises a 16S rRNA and about 50 distinct proteins.

The protein resides in the mitochondrion. This Drosophila melanogaster (Fruit fly) protein is Large ribosomal subunit protein bL33m (mRpL33).